A 144-amino-acid polypeptide reads, in one-letter code: MKAISRRRARECTLQALYSWQVSKNDVKEIERYVVTEQDIQDCNISYFHELYIGVISCAEELDKLMIPHLSRNLEKLGYIEHSVLRIALFELTKCNDIPYKVAINEAIELVKIFGAEKSHKFINGVLDKIANQLCVSTNNHIIK.

Belongs to the NusB family.

Its function is as follows. Involved in transcription antitermination. Required for transcription of ribosomal RNA (rRNA) genes. Binds specifically to the boxA antiterminator sequence of the ribosomal RNA (rrn) operons. The protein is Transcription antitermination protein NusB of Blochmanniella pennsylvanica (strain BPEN).